Reading from the N-terminus, the 460-residue chain is Indoleacetamide hydrolase (460 aa).

Residues K71 and S146 each act as charge relay system in the active site. The Acyl-ester intermediate role is filled by S169.

Belongs to the amidase family.

Its pathway is plant hormone metabolism; auxin biosynthesis. Hydrolyzes indole-3-acetamide (IAM) into indole-3-acetic acid (IAA). The polypeptide is Indoleacetamide hydrolase (iaaH) (Pantoea agglomerans pv. gypsophilae (Erwinia herbicola)).